The chain runs to 69 residues: Large ribosomal subunit protein uL29 (69 aa).

It belongs to the universal ribosomal protein uL29 family.

The protein is Large ribosomal subunit protein uL29 of Sulfolobus acidocaldarius (strain ATCC 33909 / DSM 639 / JCM 8929 / NBRC 15157 / NCIMB 11770).